Consider the following 423-residue polypeptide: Histidine--tRNA ligase (423 aa).

The protein belongs to the class-II aminoacyl-tRNA synthetase family. Homodimer.

The protein localises to the cytoplasm. The catalysed reaction is tRNA(His) + L-histidine + ATP = L-histidyl-tRNA(His) + AMP + diphosphate + H(+). This Rhodococcus opacus (strain B4) protein is Histidine--tRNA ligase.